The primary structure comprises 25 residues: QEDIEAGKQKSATCTACHGQEGNST.

A disordered region spans residues 1–25 (QEDIEAGKQKSATCTACHGQEGNST). Residues C14 and C17 each contribute to the heme site.

In terms of processing, binds 2 heme groups per subunit.

It localises to the periplasm. In terms of biological role, diheme, high potential cytochrome c believed to be an intermediate electron donor to terminal oxidation systems. The chain is Putative cytochrome c4 from Aliivibrio fischeri (Vibrio fischeri).